The chain runs to 246 residues: Small ribosomal subunit protein uS2 (246 aa).

The segment at A224–A246 is disordered. Residues E229 to P239 are compositionally biased toward acidic residues.

This sequence belongs to the universal ribosomal protein uS2 family.

This is Small ribosomal subunit protein uS2 from Bacillus velezensis (strain DSM 23117 / BGSC 10A6 / LMG 26770 / FZB42) (Bacillus amyloliquefaciens subsp. plantarum).